A 208-amino-acid chain; its full sequence is Large ribosomal subunit protein uL3 (208 aa).

Residue Q149 is modified to N5-methylglutamine.

The protein belongs to the universal ribosomal protein uL3 family. As to quaternary structure, part of the 50S ribosomal subunit. Forms a cluster with proteins L14 and L19. Post-translationally, methylated by PrmB.

Functionally, one of the primary rRNA binding proteins, it binds directly near the 3'-end of the 23S rRNA, where it nucleates assembly of the 50S subunit. This is Large ribosomal subunit protein uL3 from Haemophilus ducreyi (strain 35000HP / ATCC 700724).